The primary structure comprises 593 residues: Cysteine/serine-rich nuclear protein 1 (593 aa).

Disordered stretches follow at residues 1–66 (MTGL…RDFC), 313–392 (FREL…GVDD), and 478–497 (REGS…GQSS). Low complexity-rich tracts occupy residues 17–46 (SSVS…VSRA) and 351–372 (SCSS…TSGA).

Belongs to the AXUD1 family.

Its subcellular location is the nucleus. Its function is as follows. Binds to the consensus sequence 5'-AGAGTG-3' and has transcriptional activator activity. May have a tumor-suppressor function. May play a role in apoptosis. In Pongo abelii (Sumatran orangutan), this protein is Cysteine/serine-rich nuclear protein 1 (CSRNP1).